A 194-amino-acid chain; its full sequence is Flagellar transcriptional regulator FlhC (194 aa).

Residues Cys139, Cys142, Cys159, and Cys162 each contribute to the Zn(2+) site.

Belongs to the FlhC family. As to quaternary structure, heterohexamer composed of two FlhC and four FlhD subunits. Each FlhC binds a FlhD dimer, forming a heterotrimer, and a hexamer assembles by dimerization of two heterotrimers. The cofactor is Zn(2+).

The protein localises to the cytoplasm. Functions in complex with FlhD as a master transcriptional regulator that regulates transcription of several flagellar and non-flagellar operons by binding to their promoter region. Activates expression of class 2 flagellar genes, including fliA, which is a flagellum-specific sigma factor that turns on the class 3 genes. Also regulates genes whose products function in a variety of physiological pathways. In Xenorhabdus nematophila (Achromobacter nematophilus), this protein is Flagellar transcriptional regulator FlhC.